The chain runs to 132 residues: Protein p15 (132 aa).

May play a role in infectivity. This chain is Protein p15, found in Panicum mosaic virus (strain United States/Kansas 109S) (PMV).